Here is a 592-residue protein sequence, read N- to C-terminus: Aspartate--tRNA(Asp/Asn) ligase (592 aa).

E175 serves as a coordination point for L-aspartate. Positions 199–202 (QLFK) are aspartate. R221 contributes to the L-aspartate binding site. ATP-binding positions include 221–223 (RDE) and Q230. L-aspartate is bound at residue H447. Position 481 (E481) interacts with ATP. L-aspartate is bound at residue R488. 533 to 536 (GIDR) contacts ATP.

The protein belongs to the class-II aminoacyl-tRNA synthetase family. Type 1 subfamily. As to quaternary structure, homodimer.

It is found in the cytoplasm. The catalysed reaction is tRNA(Asx) + L-aspartate + ATP = L-aspartyl-tRNA(Asx) + AMP + diphosphate. Aspartyl-tRNA synthetase with relaxed tRNA specificity since it is able to aspartylate not only its cognate tRNA(Asp) but also tRNA(Asn). Reaction proceeds in two steps: L-aspartate is first activated by ATP to form Asp-AMP and then transferred to the acceptor end of tRNA(Asp/Asn). The polypeptide is Aspartate--tRNA(Asp/Asn) ligase (Dictyoglomus turgidum (strain DSM 6724 / Z-1310)).